Consider the following 427-residue polypeptide: Glutamate-1-semialdehyde 2,1-aminomutase (427 aa).

At K265 the chain carries N6-(pyridoxal phosphate)lysine.

The protein belongs to the class-III pyridoxal-phosphate-dependent aminotransferase family. HemL subfamily. Homodimer. Pyridoxal 5'-phosphate serves as cofactor.

The protein resides in the cytoplasm. The catalysed reaction is (S)-4-amino-5-oxopentanoate = 5-aminolevulinate. It functions in the pathway porphyrin-containing compound metabolism; protoporphyrin-IX biosynthesis; 5-aminolevulinate from L-glutamyl-tRNA(Glu): step 2/2. The protein is Glutamate-1-semialdehyde 2,1-aminomutase of Burkholderia mallei (strain NCTC 10229).